We begin with the raw amino-acid sequence, 541 residues long: Effector protein hopAB1 (541 aa).

3 disordered regions span residues 1 to 94 (MPGI…EAQQ), 168 to 222 (QRAL…RHPQ), and 317 to 338 (RQTTTNSPELPPLASSAESGRR). The segment covering 18–31 (TDGEPVTEREHDSS) has biased composition (basic and acidic residues). Residues 183–196 (SSSGSSQRSLIGRS) show a composition bias toward low complexity.

The protein belongs to the HopAB family.

The protein resides in the secreted. Functionally, effector protein that plays different roles depending on the species and plant cultivars that interact with the pathogen. Acts as a virulence determinant by enhancing the development of disease symptoms and bacterial growth. Acts as an avirulence factor by eliciting hypersensitive response (HR) and plant resistance. The chain is Effector protein hopAB1 (hopAB1) from Pseudomonas savastanoi (Pseudomonas syringae pv. savastanoi).